The chain runs to 553 residues: MRSDMIKKGLERTPHRALLKGTGVPQSQMEKPFIGVATSFTDLIPGHVGMRDLERYIEKGIHSGGGYAFFFGIPGVCDGISMGHKGMHYSLPTRELIADMVESVAEAHRLDGLVLLTNCDKITPGMLMAAARLDIPCIVVTAGPMMSGRGEAGRKYSFVTDTFEAMARYKAGVIDAQELQVCEDNACPGMGSCQGLFTANTMAILTETLGMSLPRCGTALAVSALKRRIAFASGERIVDLVKDNVTPRSILTRAAFENAIRVDLALGGSSNTVLHLLAIAHEAEVELPLETFDILAKETPQLASMNPAGEHFMEDLDTAGGVAGVLMQLGDKIKDNPTVMGLTIKQLAASIANVDETVIRPLSNPVKKEGGIAILSGNIAPKGAVVKQSGVSAAMMNFTGTARCFDSEEAAMAAIMEGKIVAGDCVVIRYEGPKGGPGMREMLAPTAAIMGLGLGDSVALITDGRFSGGTRGPCIGHISPEAAEGGPIALVEEGDRIELDIPGRRLQLLVDDETLAKRRRNWQAPAPKIRTGWLARYAKVVTSANTGAVTSAD.

Asp-78 is a Mg(2+) binding site. A [2Fe-2S] cluster-binding site is contributed by Cys-119. Asp-120 and Lys-121 together coordinate Mg(2+). Lys-121 carries the N6-carboxylysine modification. A [2Fe-2S] cluster-binding site is contributed by Cys-193. A Mg(2+)-binding site is contributed by Glu-441. The Proton acceptor role is filled by Ser-467.

This sequence belongs to the IlvD/Edd family. In terms of assembly, homodimer. [2Fe-2S] cluster is required as a cofactor. It depends on Mg(2+) as a cofactor.

It catalyses the reaction (2R)-2,3-dihydroxy-3-methylbutanoate = 3-methyl-2-oxobutanoate + H2O. The enzyme catalyses (2R,3R)-2,3-dihydroxy-3-methylpentanoate = (S)-3-methyl-2-oxopentanoate + H2O. The protein operates within amino-acid biosynthesis; L-isoleucine biosynthesis; L-isoleucine from 2-oxobutanoate: step 3/4. Its pathway is amino-acid biosynthesis; L-valine biosynthesis; L-valine from pyruvate: step 3/4. Functions in the biosynthesis of branched-chain amino acids. Catalyzes the dehydration of (2R,3R)-2,3-dihydroxy-3-methylpentanoate (2,3-dihydroxy-3-methylvalerate) into 2-oxo-3-methylpentanoate (2-oxo-3-methylvalerate) and of (2R)-2,3-dihydroxy-3-methylbutanoate (2,3-dihydroxyisovalerate) into 2-oxo-3-methylbutanoate (2-oxoisovalerate), the penultimate precursor to L-isoleucine and L-valine, respectively. This Geotalea daltonii (strain DSM 22248 / JCM 15807 / FRC-32) (Geobacter daltonii) protein is Dihydroxy-acid dehydratase.